Consider the following 398-residue polypeptide: MRTPVILVAGQDHTDEVTGALLRRTGTVVVEHRFDGHVVRRMTATLSRGELITTEDALEFAHGCVSCTIRDDLLVLLRRLHRRDNVGRIVVHLAPWLEPQPICWAIDHVRVCVGHGYPDGPAALDVRVAAVVTCVDCVRWLPQSLGEDELPDGRTVAQVTVGQAEFADLLVLTHPEPVAVAVLRRLAPRARITGGVDRVELALAHLDDNSRRGRTDTPHTPLLAGLPPLAADGEVAIVEFSARRPFHPQRLHAAVDLLLDGVVRTRGRLWLANRPDQVMWLESAGGGLRVASAGKWLAAMAASEVAYVDLERRLFADLMWVYPFGDRHTAMTVLVCGADPTDIVNALNAALLSDDEMASPQRWQSYVDPFGDWHDDPCHEMPDAAGEFSAHRNSGESR.

The CobW C-terminal domain occupies 235–351 (VAIVEFSARR…DIVNALNAAL (117 aa)).

This is an uncharacterized protein from Mycobacterium bovis (strain ATCC BAA-935 / AF2122/97).